The primary structure comprises 207 residues: Large ribosomal subunit protein uL4 (207 aa).

Residues 49–78 (HAVKNRSAVSGGGRKPWRQKGTGRARQGSI) are disordered.

The protein belongs to the universal ribosomal protein uL4 family. As to quaternary structure, part of the 50S ribosomal subunit.

One of the primary rRNA binding proteins, this protein initially binds near the 5'-end of the 23S rRNA. It is important during the early stages of 50S assembly. It makes multiple contacts with different domains of the 23S rRNA in the assembled 50S subunit and ribosome. Functionally, forms part of the polypeptide exit tunnel. In Streptococcus suis (strain 98HAH33), this protein is Large ribosomal subunit protein uL4.